The following is a 282-amino-acid chain: Bifunctional protein FolD (282 aa).

NADP(+) contacts are provided by residues 166–168 (GAS) and isoleucine 232.

The protein belongs to the tetrahydrofolate dehydrogenase/cyclohydrolase family. Homodimer.

The catalysed reaction is (6R)-5,10-methylene-5,6,7,8-tetrahydrofolate + NADP(+) = (6R)-5,10-methenyltetrahydrofolate + NADPH. It catalyses the reaction (6R)-5,10-methenyltetrahydrofolate + H2O = (6R)-10-formyltetrahydrofolate + H(+). It participates in one-carbon metabolism; tetrahydrofolate interconversion. Catalyzes the oxidation of 5,10-methylenetetrahydrofolate to 5,10-methenyltetrahydrofolate and then the hydrolysis of 5,10-methenyltetrahydrofolate to 10-formyltetrahydrofolate. The polypeptide is Bifunctional protein FolD (Haemophilus influenzae (strain PittGG)).